A 211-amino-acid polypeptide reads, in one-letter code: dITP/XTP pyrophosphatase (211 aa).

A substrate-binding site is contributed by 7–12 (TSNKKK). Mg(2+) is bound by residues Glu-43 and Asp-72. The active-site Proton acceptor is the Asp-72. Residues Ser-73, 169–172 (FGYD), Lys-190, and 195–196 (HR) contribute to the substrate site.

It belongs to the HAM1 NTPase family. As to quaternary structure, homodimer. It depends on Mg(2+) as a cofactor.

It carries out the reaction XTP + H2O = XMP + diphosphate + H(+). The catalysed reaction is dITP + H2O = dIMP + diphosphate + H(+). It catalyses the reaction ITP + H2O = IMP + diphosphate + H(+). Its function is as follows. Pyrophosphatase that catalyzes the hydrolysis of nucleoside triphosphates to their monophosphate derivatives, with a high preference for the non-canonical purine nucleotides XTP (xanthosine triphosphate), dITP (deoxyinosine triphosphate) and ITP. Seems to function as a house-cleaning enzyme that removes non-canonical purine nucleotides from the nucleotide pool, thus preventing their incorporation into DNA/RNA and avoiding chromosomal lesions. This is dITP/XTP pyrophosphatase from Hydrogenobaculum sp. (strain Y04AAS1).